The following is a 439-amino-acid chain: Xylose isomerase (439 aa).

Residues His-100 and Asp-103 contribute to the active site. 7 residues coordinate Mg(2+): Glu-231, Glu-267, His-270, Asp-295, Asp-306, Asp-308, and Asp-338.

This sequence belongs to the xylose isomerase family. In terms of assembly, homotetramer. It depends on Mg(2+) as a cofactor.

The protein resides in the cytoplasm. The catalysed reaction is alpha-D-xylose = alpha-D-xylulofuranose. The sequence is that of Xylose isomerase from Rhodopirellula baltica (strain DSM 10527 / NCIMB 13988 / SH1).